The chain runs to 372 residues: Fork head domain-containing protein FD4 (372 aa).

A DNA-binding region (fork-head) is located at residues 12-103; the sequence is QKPPYSYISL…FDMFENGSLL (92 aa). Disordered regions lie at residues 225–245 and 261–281; these read ESLITPDKPEHPSEDEDDEDD and PTTPAASEEYMSASRSSRTED.

In terms of tissue distribution, expressed in early embryogenesis in 14 symmetrical pairs of segmentally arranged neuroblasts. Also, later in embryogenesis, in a cluster of cells in head region.

Its subcellular location is the nucleus. Functionally, involved in development during embryogenesis. The protein is Fork head domain-containing protein FD4 (fd96Ca) of Drosophila melanogaster (Fruit fly).